Consider the following 357-residue polypeptide: Protein pelota homolog (357 aa).

Belongs to the eukaryotic release factor 1 family. Pelota subfamily. In terms of assembly, monomer. A divalent metal cation serves as cofactor.

Its subcellular location is the cytoplasm. May function in recognizing stalled ribosomes, interact with stem-loop structures in stalled mRNA molecules, and effect endonucleolytic cleavage of the mRNA. May play a role in the release non-functional ribosomes and degradation of damaged mRNAs. Has endoribonuclease activity. The polypeptide is Protein pelota homolog (Methanocella arvoryzae (strain DSM 22066 / NBRC 105507 / MRE50)).